The primary structure comprises 415 residues: Multifunctional CCA protein (415 aa).

The ATP site is built by glycine 8 and arginine 11. Positions 8 and 11 each coordinate CTP. Mg(2+) is bound by residues aspartate 21 and aspartate 23. The ATP site is built by arginine 91, arginine 137, and arginine 140. Residues arginine 91, arginine 137, and arginine 140 each coordinate CTP. Positions 228–329 (TGIHTLMTLA…VGLFDSIDAW (102 aa)) constitute an HD domain.

This sequence belongs to the tRNA nucleotidyltransferase/poly(A) polymerase family. Bacterial CCA-adding enzyme type 1 subfamily. As to quaternary structure, monomer. Can also form homodimers and oligomers. It depends on Mg(2+) as a cofactor. Requires Ni(2+) as cofactor.

The enzyme catalyses a tRNA precursor + 2 CTP + ATP = a tRNA with a 3' CCA end + 3 diphosphate. It carries out the reaction a tRNA with a 3' CCA end + 2 CTP + ATP = a tRNA with a 3' CCACCA end + 3 diphosphate. Catalyzes the addition and repair of the essential 3'-terminal CCA sequence in tRNAs without using a nucleic acid template. Adds these three nucleotides in the order of C, C, and A to the tRNA nucleotide-73, using CTP and ATP as substrates and producing inorganic pyrophosphate. tRNA 3'-terminal CCA addition is required both for tRNA processing and repair. Also involved in tRNA surveillance by mediating tandem CCA addition to generate a CCACCA at the 3' terminus of unstable tRNAs. While stable tRNAs receive only 3'-terminal CCA, unstable tRNAs are marked with CCACCA and rapidly degraded. The sequence is that of Multifunctional CCA protein from Cronobacter sakazakii (strain ATCC BAA-894) (Enterobacter sakazakii).